A 173-amino-acid polypeptide reads, in one-letter code: ATP synthase subunit d, mitochondrial (173 aa).

A mitochondrion-targeting transit peptide spans 1–23; it reads MAARSAALKIDWVKVTSSLGLRG.

It belongs to the ATPase d subunit family. As to quaternary structure, F-type ATPases have 2 components, CF(1) - the catalytic core - and CF(0) - the membrane proton channel. In yeast, the dimeric form of ATP synthase consists of 17 polypeptides: alpha, beta, gamma, delta, epsilon, 4 (B), 5 (OSCP), 6 (A), 8, 9 (C), d, E (Tim11), f, g, h, i/j and k.

Its subcellular location is the mitochondrion inner membrane. Its function is as follows. Mitochondrial membrane ATP synthase (F(1)F(0) ATP synthase or Complex V) produces ATP from ADP in the presence of a proton gradient across the membrane which is generated by electron transport complexes of the respiratory chain. F-type ATPases consist of two structural domains, F(1) - containing the extramembraneous catalytic core, and F(0) - containing the membrane proton channel, linked together by a central stalk and a peripheral stalk. During catalysis, ATP synthesis in the catalytic domain of F(1) is coupled via a rotary mechanism of the central stalk subunits to proton translocation. Part of the complex F(0) domain and the peripheric stalk, which acts as a stator to hold the catalytic alpha(3)beta(3) subcomplex and subunit a/ATP6 static relative to the rotary elements. The sequence is that of ATP synthase subunit d, mitochondrial (atp7) from Aspergillus terreus (strain NIH 2624 / FGSC A1156).